The primary structure comprises 317 residues: 1-phosphatidylinositol phosphodiesterase (317 aa).

The N-terminal stretch at 1-22 (MYKNYLQRTLVLLLCFILYFFT) is a signal peptide. The 139-residue stretch at 58 to 196 (LAALSIPGTH…LKDVRGKILL (139 aa)) folds into the PI-PLC X-box domain. The active-site Proton acceptor is His67. His115 functions as the Proton donor in the catalytic mechanism.

Monomer.

It is found in the secreted. It localises to the cytoplasm. It catalyses the reaction a 1,2-diacyl-sn-glycero-3-phospho-(1D-myo-inositol) = 1D-myo-inositol 1,2-cyclic phosphate + a 1,2-diacyl-sn-glycerol. Its function is as follows. Cleaves glycosylphosphatidylinositol (GPI) and phosphatidylinositol (PI) anchors but not PI phosphates. Important factor in pathogenesis, PI-PLC activity is present only in virulent listeria species. It may participate in the lysis of the phagolysosomal membrane. This Listeria monocytogenes serovar 1/2a (strain ATCC BAA-679 / EGD-e) protein is 1-phosphatidylinositol phosphodiesterase (plcA).